A 625-amino-acid polypeptide reads, in one-letter code: BTB/POZ domain-containing protein At5g48130 (625 aa).

In terms of domain architecture, BTB spans 41–105 (ASVHVRVCNK…IYGCPTLIHP (65 aa)). The NPH3 domain occupies 217–469 (DTWIKDLTDL…VQALFIQQLN (253 aa)). Residues 494-507 (VPSSRPLTSQQSPC) are compositionally biased toward polar residues. A disordered region spans residues 494-513 (VPSSRPLTSQQSPCTDDETG).

It belongs to the NPH3 family.

The protein operates within protein modification; protein ubiquitination. May act as a substrate-specific adapter of an E3 ubiquitin-protein ligase complex (CUL3-RBX1-BTB) which mediates the ubiquitination and subsequent proteasomal degradation of target proteins. The sequence is that of BTB/POZ domain-containing protein At5g48130 from Arabidopsis thaliana (Mouse-ear cress).